The primary structure comprises 277 residues: Large ribosomal subunit protein uL2 (277 aa).

Residues Thr219–Lys277 are disordered. Basic and acidic residues predominate over residues Ala264 to Lys277.

It belongs to the universal ribosomal protein uL2 family. Part of the 50S ribosomal subunit. Forms a bridge to the 30S subunit in the 70S ribosome.

Its function is as follows. One of the primary rRNA binding proteins. Required for association of the 30S and 50S subunits to form the 70S ribosome, for tRNA binding and peptide bond formation. It has been suggested to have peptidyltransferase activity; this is somewhat controversial. Makes several contacts with the 16S rRNA in the 70S ribosome. The sequence is that of Large ribosomal subunit protein uL2 from Streptococcus gordonii (strain Challis / ATCC 35105 / BCRC 15272 / CH1 / DL1 / V288).